Reading from the N-terminus, the 235-residue chain is Proteasome subunit alpha type-2-A (235 aa).

Lys64 is covalently cross-linked (Glycyl lysine isopeptide (Lys-Gly) (interchain with G-Cter in ubiquitin)).

It belongs to the peptidase T1A family. In terms of assembly, component of the 20S core complex of the 26S proteasome. The 26S proteasome is composed of a core protease (CP), known as the 20S proteasome, capped at one or both ends by the 19S regulatory particle (RP/PA700). The 20S proteasome core is composed of 28 subunits that are arranged in four stacked rings, resulting in a barrel-shaped structure. The two end rings are each formed by seven alpha subunits, and the two central rings are each formed by seven beta subunits. The catalytic chamber with the active sites is on the inside of the barrel.

It is found in the cytoplasm. It localises to the nucleus. Functionally, the proteasome is a multicatalytic proteinase complex which is characterized by its ability to cleave peptides with Arg, Phe, Tyr, Leu, and Glu adjacent to the leaving group at neutral or slightly basic pH. The proteasome has an ATP-dependent proteolytic activity. The polypeptide is Proteasome subunit alpha type-2-A (PAB1) (Arabidopsis thaliana (Mouse-ear cress)).